Here is a 569-residue protein sequence, read N- to C-terminus: Urease subunit alpha (569 aa).

The Urease domain occupies 131-569; the sequence is GGIDAHIHWI…LPLAQRYFLF (439 aa). H136, H138, and K219 together coordinate Ni(2+). K219 carries the N6-carboxylysine modification. Position 221 (H221) interacts with substrate. The Ni(2+) site is built by H248 and H274. The active-site Proton donor is the H322. D362 provides a ligand contact to Ni(2+).

Belongs to the metallo-dependent hydrolases superfamily. Urease alpha subunit family. Heterotrimer of UreA (gamma), UreB (beta) and UreC (alpha) subunits. Three heterotrimers associate to form the active enzyme. It depends on Ni cation as a cofactor. Carboxylation allows a single lysine to coordinate two nickel ions.

It is found in the cytoplasm. The enzyme catalyses urea + 2 H2O + H(+) = hydrogencarbonate + 2 NH4(+). Its pathway is nitrogen metabolism; urea degradation; CO(2) and NH(3) from urea (urease route): step 1/1. The polypeptide is Urease subunit alpha (Magnetococcus marinus (strain ATCC BAA-1437 / JCM 17883 / MC-1)).